The sequence spans 209 residues: Guanylate kinase (209 aa).

The Guanylate kinase-like domain occupies 5–184 (GLLIVFSGPS…AAERVKRVIE (180 aa)). 12-19 (GPSGVGKG) serves as a coordination point for ATP.

This sequence belongs to the guanylate kinase family.

The protein localises to the cytoplasm. The catalysed reaction is GMP + ATP = GDP + ADP. Essential for recycling GMP and indirectly, cGMP. This chain is Guanylate kinase, found in Streptococcus thermophilus (strain CNRZ 1066).